A 249-amino-acid chain; its full sequence is tRNA (guanine-N(1)-)-methyltransferase (249 aa).

S-adenosyl-L-methionine is bound by residues glycine 112 and 132–137 (LGDFVL).

Belongs to the RNA methyltransferase TrmD family. As to quaternary structure, homodimer.

It localises to the cytoplasm. It carries out the reaction guanosine(37) in tRNA + S-adenosyl-L-methionine = N(1)-methylguanosine(37) in tRNA + S-adenosyl-L-homocysteine + H(+). Specifically methylates guanosine-37 in various tRNAs. This is tRNA (guanine-N(1)-)-methyltransferase from Geobacter sp. (strain M21).